Here is a 92-residue protein sequence, read N- to C-terminus: WPAYPGPNGIRSSVCQTKLGCGKKNLATKGVCKAFCLGRKRFWQKCGKNGSSGKGSKICNAVLAHAVEKAGKGLIKVTDMAVAAIIKYAGKK.

3 disulfide bridges follow: C15/C36, C21/C32, and C46/C59.

It belongs to the worm cytolysin family. Localized within the skin and proboscis and are most readily isolated from body mucus secretions.

It localises to the secreted. Its function is as follows. Cytolysin that shows hemolytic activity (on bovine erythrocytes, HC(50)=5.75 mg/ml). This hemolytic activity is completely inhibited by small unilamelar vesicles composed of PC/PG, PC/PI and PC/PS in 1:1 molar ratios (with at least 100 mg/ml concentration). The chain is Parbolysin P7 from Parborlasia corrugatus (Antarctic nemertean worm).